The following is a 2622-amino-acid chain: Ankyrin-3 (2622 aa).

The tract at residues 1 to 44 (MAHAASQLKKNRDLEINAEEETEKKKKHRKRSRDRKKKSDANAS) is disordered. Residues 25 to 38 (KKKHRKRSRDRKKK) are compositionally biased toward basic residues. Ser-39 bears the Phosphoserine mark. ANK repeat units follow at residues 73–102 (NGLN…NVDA), 106–135 (KGNT…NVNA), 139–168 (NGFT…SQSL), 172–201 (DGFT…KGKV), 203–230 (LPAL…NADI), 242–271 (SGFT…AVDF), 275–304 (NDIT…KIDA), 308–337 (DGLT…PILS), 341–370 (NGLS…PVDD), 374–403 (DYLT…NPNA), 407–436 (NGFT…SIQA), 440–469 (SGLT…SPNT), 473–502 (RGET…QVEA), 506–535 (DDQT…SPNA), 539–568 (SGYT…SLSI), 572–601 (KGFT…SPDA), 605–634 (SGLT…SPHA), 638–667 (NGYT…DANA), 671–700 (QGIA…NVNL), 704–733 (SGLT…HVDA), 737–766 (MGYT…KVNA), 770–799 (NGYT…SPNE), and 803–832 (NGNT…EIMT). Ser-631 carries the post-translational modification Phosphoserine. A phosphoserine mark is found at Val-851, Ser-855, Ser-869, Ser-875, Ser-921, Ser-924, Ser-930, Ser-965, Ser-967, and Ser-1121. The segment at 868 to 889 (LSDGEYISDGEEGEDAITGDTD) is disordered. The segment covering 873–884 (YISDGEEGEDAI) has biased composition (acidic residues). ZU5 domains lie at 992-1147 (FLVS…VVSR) and 1149-1296 (KQES…LADC). A phosphoserine mark is found at Ser-1458 and Ser-1469. The disordered stretch occupies residues 1510–1539 (TPITVPGPAKSGSLSSSPSNTPSASPLKSI). Positions 1515-1536 (PGPAKSGSLSSSPSNTPSASPL) are enriched in low complexity. Ser-1621, Ser-1624, Ser-1679, Ser-1984, Ser-2102, Ser-2114, and Ser-2117 each carry phosphoserine. 3 disordered regions span residues 1968 to 1992 (VESK…WTEF), 2099 to 2147 (ILES…FHEV), and 2292 to 2312 (SPDV…KDNQ). A compositionally biased stretch (basic and acidic residues) spans 1977 to 1986 (PKSDKGHSPE). A compositionally biased stretch (basic and acidic residues) spans 2106-2127 (FSQHDQDKSPLSDSGFETRSEK). Positions 2128-2137 (TPSAPQSAES) are enriched in polar residues. A Death domain is found at 2336 to 2420 (TDIRMAIVAD…DIVTLLEGPI (85 aa)). 3 positions are modified to phosphoserine: Ser-2457, Ser-2475, and Ser-2544. Residues 2568–2622 (CVPVGMKKMTRTPADGKARLNLQEEEGSARSEPKQGEGYKVKTKKEIRNVEKKAH) are disordered. The segment covering 2594–2622 (GSARSEPKQGEGYKVKTKKEIRNVEKKAH) has biased composition (basic and acidic residues).

As to quaternary structure, may be a constituent of a NFASC/NRCAM/ankyrin G complex. Interacts with RHBG. Directly interacts with DMD and betaDAG1; this interaction does not interfere with DMD-binding and is required for DMD and betaDAG1 retention at costameres. Interacts (via N-terminal ANK repeats) with SCHIP1 isoform 7 (via C-terminus); this interaction is required for the localization at axon initial segments (AISs) and nodes of Ranvier (NRs). Interacts with PLEC and FLNC. Interacts (via ANK repeats) with IQCJ-SCHIP1; required for IQCJ-SCHIP1 localization at axon initial segments (AIS) and nodes of Ranvier. Interacts with SCHIP1. Interacts with KCNA1; this inhibits channel activity. Interacts with SCN5A. Interacts with PKP2 and GJA1/CX43. Interacts (via its C-terminal muscle-specific Obscurin/Titin-Binding-related domain sequence) with PLEC and FLNC. As to expression, expressed in the heart (at protein level). Expressed in skeletal muscle (at protein level). Expressed at highest levels in brain and testis, followed by skin, kidney, liver and spleen. May be specifically expressed in muscle tissues, including heart and skeletal muscle (extensor digitorum longus) (at protein level). In terms of tissue distribution, expressed in skeletal muscle, brain, lung, heart, testes and kidney.

The protein localises to the cytoplasm. Its subcellular location is the cytoskeleton. It localises to the cell projection. It is found in the axon. The protein resides in the cell membrane. The protein localises to the sarcolemma. Its subcellular location is the postsynaptic cell membrane. It localises to the lysosome. It is found in the T-tubule. Functionally, membrane-cytoskeleton linker. May participate in the maintenance/targeting of ion channels and cell adhesion molecules at the nodes of Ranvier and axonal initial segments. In skeletal muscle, required for costamere localization of DMD and betaDAG1. Regulates KCNA1 channel activity in function of dietary Mg(2+) levels, and thereby contributes to the regulation of renal Mg(2+) reabsorption. Required for intracellular adhesion and junctional conductance in myocytes, potentially via stabilization of GJA1/CX43 protein abundance and promotion of PKP2, GJA1/CX43, and SCN5A/Nav1.5 localization to cell-cell junctions. The polypeptide is Ankyrin-3 (Ank3) (Rattus norvegicus (Rat)).